We begin with the raw amino-acid sequence, 152 residues long: 6,7-dimethyl-8-ribityllumazine synthase (152 aa).

Residues Phe-21, 55-57 (AFE), and 79-81 (AVI) contribute to the 5-amino-6-(D-ribitylamino)uracil site. Position 84–85 (84–85 (AT)) interacts with (2S)-2-hydroxy-3-oxobutyl phosphate. Residue His-87 is the Proton donor of the active site. Phe-112 contacts 5-amino-6-(D-ribitylamino)uracil. Residue Arg-126 coordinates (2S)-2-hydroxy-3-oxobutyl phosphate.

The protein belongs to the DMRL synthase family. Forms an icosahedral capsid composed of 60 subunits, arranged as a dodecamer of pentamers.

It catalyses the reaction (2S)-2-hydroxy-3-oxobutyl phosphate + 5-amino-6-(D-ribitylamino)uracil = 6,7-dimethyl-8-(1-D-ribityl)lumazine + phosphate + 2 H2O + H(+). It functions in the pathway cofactor biosynthesis; riboflavin biosynthesis; riboflavin from 2-hydroxy-3-oxobutyl phosphate and 5-amino-6-(D-ribitylamino)uracil: step 1/2. Functionally, catalyzes the formation of 6,7-dimethyl-8-ribityllumazine by condensation of 5-amino-6-(D-ribitylamino)uracil with 3,4-dihydroxy-2-butanone 4-phosphate. This is the penultimate step in the biosynthesis of riboflavin. This chain is 6,7-dimethyl-8-ribityllumazine synthase, found in Exiguobacterium sibiricum (strain DSM 17290 / CCUG 55495 / CIP 109462 / JCM 13490 / 255-15).